The sequence spans 980 residues: Alanine--tRNA ligase, mitochondrial (980 aa).

The N-terminal 23 residues, 1–23 (MAVALAAAAGKLRRAIGRSCPWQ), are a transit peptide targeting the mitochondrion. ATP contacts are provided by residues arginine 105, histidine 123, tryptophan 205, and 235–237 (LWN). L-alanine-binding residues include asparagine 237 and aspartate 260. Glycine 264 is a binding site for ATP. Zn(2+) contacts are provided by histidine 627, histidine 631, cysteine 744, and histidine 748.

This sequence belongs to the class-II aminoacyl-tRNA synthetase family. In terms of assembly, monomer. Requires Zn(2+) as cofactor.

Its subcellular location is the mitochondrion. It carries out the reaction tRNA(Ala) + L-alanine + ATP = L-alanyl-tRNA(Ala) + AMP + diphosphate. The enzyme catalyses (S)-lactate + ATP + H(+) = (S)-lactoyl-AMP + diphosphate. The catalysed reaction is (S)-lactoyl-AMP + L-lysyl-[protein] = N(6)-[(S)-lactoyl]-L-lysyl-[protein] + AMP + 2 H(+). Functionally, catalyzes the attachment of alanine to tRNA(Ala) in a two-step reaction: alanine is first activated by ATP to form Ala-AMP and then transferred to the acceptor end of tRNA(Ala). Also edits incorrectly charged tRNA(Ala) via its editing domain. In presence of high levels of lactate, also acts as a protein lactyltransferase that mediates lactylation of lysine residues in target proteins, such as CGAS. Acts as an inhibitor of cGAS/STING signaling by catalyzing lactylation of CGAS, preventing the formation of liquid-like droplets in which CGAS is activated. This Mus musculus (Mouse) protein is Alanine--tRNA ligase, mitochondrial (Aars2).